A 348-amino-acid chain; its full sequence is Ferredoxin--NADP reductase 1 (348 aa).

7 residues coordinate FAD: aspartate 33, lysine 41, tyrosine 45, valine 85, leucine 120, aspartate 287, and serine 328.

Belongs to the ferredoxin--NADP reductase type 2 family. Homodimer. The cofactor is FAD.

It carries out the reaction 2 reduced [2Fe-2S]-[ferredoxin] + NADP(+) + H(+) = 2 oxidized [2Fe-2S]-[ferredoxin] + NADPH. This chain is Ferredoxin--NADP reductase 1, found in Oceanobacillus iheyensis (strain DSM 14371 / CIP 107618 / JCM 11309 / KCTC 3954 / HTE831).